The primary structure comprises 353 residues: Photosystem II D2 protein (353 aa).

The residue at position 2 (T2) is an N-acetylthreonine. Phosphothreonine is present on T2. A helical transmembrane segment spans residues 41-61 (CAYFALGGWFTGTTFVTSWYT). H118 lines the chlorophyll a pocket. A helical membrane pass occupies residues 125 to 141 (GFMLRQFEIARSVNLRP). Q130 and N143 together coordinate pheophytin a. The chain crosses the membrane as a helical span at residues 153-166 (VFVSVFLIYPLGQS). H198 is a chlorophyll a binding site. A helical membrane pass occupies residues 208-228 (AALLCAIHGATVENTLFEDGD). H215 and F262 together coordinate a plastoquinone. H215 lines the Fe cation pocket. Residue H269 coordinates Fe cation. Residues 279 to 295 (GLWMSAIGVVGLALNLR) form a helical membrane-spanning segment.

The protein belongs to the reaction center PufL/M/PsbA/D family. In terms of assembly, PSII is composed of 1 copy each of membrane proteins PsbA, PsbB, PsbC, PsbD, PsbE, PsbF, PsbH, PsbI, PsbJ, PsbK, PsbL, PsbM, PsbT, PsbX, PsbY, PsbZ, Psb30/Ycf12, at least 3 peripheral proteins of the oxygen-evolving complex and a large number of cofactors. It forms dimeric complexes. The D1/D2 heterodimer binds P680, chlorophylls that are the primary electron donor of PSII, and subsequent electron acceptors. It shares a non-heme iron and each subunit binds pheophytin, quinone, additional chlorophylls, carotenoids and lipids. There is also a Cl(-1) ion associated with D1 and D2, which is required for oxygen evolution. The PSII complex binds additional chlorophylls, carotenoids and specific lipids. serves as cofactor.

The protein localises to the plastid. It is found in the chloroplast thylakoid membrane. The catalysed reaction is 2 a plastoquinone + 4 hnu + 2 H2O = 2 a plastoquinol + O2. Functionally, photosystem II (PSII) is a light-driven water:plastoquinone oxidoreductase that uses light energy to abstract electrons from H(2)O, generating O(2) and a proton gradient subsequently used for ATP formation. It consists of a core antenna complex that captures photons, and an electron transfer chain that converts photonic excitation into a charge separation. The D1/D2 (PsbA/PsbD) reaction center heterodimer binds P680, the primary electron donor of PSII as well as several subsequent electron acceptors. D2 is needed for assembly of a stable PSII complex. The polypeptide is Photosystem II D2 protein (Tetradesmus obliquus (Green alga)).